Reading from the N-terminus, the 506-residue chain is Maturase K (506 aa).

The protein belongs to the intron maturase 2 family. MatK subfamily.

It localises to the plastid. Its subcellular location is the chloroplast. Functionally, usually encoded in the trnK tRNA gene intron. Probably assists in splicing its own and other chloroplast group II introns. This chain is Maturase K, found in Olea europaea (Common olive).